Here is a 337-residue protein sequence, read N- to C-terminus: Glyceraldehyde-3-phosphate dehydrogenase (337 aa).

NAD(+) is bound by residues 12–13 (RI), Asp34, and Arg79. D-glyceraldehyde 3-phosphate is bound by residues 150-152 (SCT), Thr181, 210-211 (TG), and Arg233. Cys151 functions as the Nucleophile in the catalytic mechanism. Residue Asn315 coordinates NAD(+).

This sequence belongs to the glyceraldehyde-3-phosphate dehydrogenase family. As to quaternary structure, homotetramer.

Its subcellular location is the cytoplasm. The enzyme catalyses D-glyceraldehyde 3-phosphate + phosphate + NAD(+) = (2R)-3-phospho-glyceroyl phosphate + NADH + H(+). Its pathway is carbohydrate degradation; glycolysis; pyruvate from D-glyceraldehyde 3-phosphate: step 1/5. This chain is Glyceraldehyde-3-phosphate dehydrogenase (GPD), found in Coccidioides immitis (strain RS) (Valley fever fungus).